The sequence spans 113 residues: Large ribosomal subunit protein uL24 (113 aa).

Belongs to the universal ribosomal protein uL24 family. As to quaternary structure, part of the 50S ribosomal subunit.

One of two assembly initiator proteins, it binds directly to the 5'-end of the 23S rRNA, where it nucleates assembly of the 50S subunit. In terms of biological role, one of the proteins that surrounds the polypeptide exit tunnel on the outside of the subunit. The sequence is that of Large ribosomal subunit protein uL24 from Synechococcus sp. (strain RCC307).